The chain runs to 1531 residues: Lysophospholipase nte1 (1531 aa).

The Cytoplasmic portion of the chain corresponds to 1–72 (MATGDGIIAA…TPPAPSTMVG (72 aa)). The helical transmembrane segment at 73-93 (WIGWIFSFIFQVIPSVLYWIV) threads the bilayer. Over 94–115 (TFTTITLPTWLFTLFSMSLTFT) the chain is Lumenal. Residues 116-136 (MNFTTLLLIALAVVSTISWFI) traverse the membrane as a helical segment. The Cytoplasmic segment spans residues 137 to 1531 (RYRFLNMYSR…RTLAPRRASI (1395 aa)). Disordered regions lie at residues 242–265 (GSDEELNRMAGESSDEDDHRPDGR), 303–385 (ASSA…TRRK), and 766–789 (NTSSSRVSGSAAAANDPRRKKQSR). The segment covering 325–343 (REMDDSPHVYQGDRLDPAS) has biased composition (basic and acidic residues). A nucleoside 3',5'-cyclic phosphate contacts are provided by residues 689 to 809 (GGTS…AVAS) and 849 to 969 (RLTS…IAQR). A compositionally biased stretch (low complexity) spans 768 to 779 (SSSRVSGSAAAA). The region spanning 1228–1392 (LVLGGGGARG…IDNLTVDHMK (165 aa)) is the PNPLA domain. Residues 1232 to 1237 (GGGARG) carry the GXGXXG motif. The GXSXG motif lies at 1259-1263 (GTSIG). The Nucleophile role is filled by serine 1261. Residue aspartate 1379 is the Proton acceptor of the active site. The short motif at 1379 to 1381 (DGG) is the DGA/G element. Positions 1510–1531 (LPEETEEKKKLQRTLAPRRASI) are disordered.

It belongs to the NTE family.

The protein resides in the endoplasmic reticulum membrane. It carries out the reaction a 1-acyl-sn-glycero-3-phosphocholine + H2O = sn-glycerol 3-phosphocholine + a fatty acid + H(+). With respect to regulation, inhibited by organophosphorus esters. Its function is as follows. Intracellular phospholipase B that catalyzes the double deacylation of phosphatidylcholine (PC) to glycerophosphocholine (GroPCho). Plays an important role in membrane lipid homeostasis. Responsible for the rapid PC turnover in response to inositol, elevated temperatures, or when choline is present in the growth medium. The protein is Lysophospholipase nte1 (nte1) of Aspergillus niger (strain ATCC MYA-4892 / CBS 513.88 / FGSC A1513).